The chain runs to 391 residues: Nucleosome assembly protein 1-like 1 (391 aa).

Residues 1 to 10 (MADIDNKEQS) show a composition bias toward basic and acidic residues. The segment at 1 to 32 (MADIDNKEQSELDQDLDDVEEVEEEETGEETK) is disordered. A2 carries the post-translational modification N-acetylalanine. The residue at position 10 (S10) is a Phosphoserine. Residues 11–28 (ELDQDLDDVEEVEEEETG) show a composition bias toward acidic residues. Residues T62 and T64 each carry the phosphothreonine modification. The residue at position 69 (S69) is a Phosphoserine. K116 carries the N6-acetyllysine modification. An NAP1L motif motif is present at residues 125-150 (YEPTEEECEWKPDEEDEISEELKEKA). Residues 132 to 143 (CEWKPDEEDEIS) show a composition bias toward acidic residues. A disordered region spans residues 132–163 (CEWKPDEEDEISEELKEKAKVEDEKKDEEKED). Residue S143 is modified to Phosphoserine. A compositionally biased stretch (basic and acidic residues) spans 144-163 (EELKEKAKVEDEKKDEEKED). The short motif at 273-279 (IKKKQKH) is the Nuclear localization signal element. Residues 345 to 391 (EAIEDDDDDYDEEGEEADEEGEEEGDEENDPDYDPKKDQNPAECKQQ) form a disordered region. Positions 346 to 376 (AIEDDDDDYDEEGEEADEEGEEEGDEENDPD) are enriched in acidic residues. 5-glutamyl polyglycine is present on residues E359 and E360. A compositionally biased stretch (basic and acidic residues) spans 377–391 (YDPKKDQNPAECKQQ). C388 carries the cysteine methyl ester modification. Residue C388 is the site of S-farnesyl cysteine attachment. Positions 389–391 (KQQ) are cleaved as a propeptide — removed in mature form.

Belongs to the nucleosome assembly protein (NAP) family. In terms of assembly, homodimer. The dimer binds strongly and sequentially to single and double H2A-H2B heterodimers. Interacts with ERCC6; this interaction increases ERCC6 processivity. Interacts with RAD54. Interacts with SETD1A. Polyglycylated by TTLL10 on glutamate residues, resulting in polyglycine chains on the gamma-carboxyl group. Both polyglutamylation and polyglycylation modifications can coexist on the same protein on adjacent residues, and lowering polyglycylation levels increases polyglutamylation, and reciprocally. In terms of processing, polyglutamylated by TTLL4 on glutamate residues, resulting in polyglutamate chains on the gamma-carboxyl group. Both polyglutamylation and polyglycylation modifications can coexist on the same protein on adjacent residues, and lowering polyglycylation levels increases polyglutamylation, and reciprocally.

It localises to the nucleus. Its subcellular location is the melanosome. The protein resides in the cytoplasm. Its function is as follows. Histone chaperone that plays a role in the nuclear import of H2A-H2B and nucleosome assembly. Also participates in several important DNA repair mechanisms: greatly enhances ERCC6-mediated chromatin remodeling which is essential for transcription-coupled nucleotide excision DNA repair. Also stimulates homologous recombination (HR) by RAD51 and RAD54 which is essential in mitotic DNA double strand break (DSB) repair. Plays a key role in the regulation of embryonic neurogenesis. Promotes the proliferation of neural progenitors and inhibits neuronal differentiation during cortical development. Regulates neurogenesis via the modulation of RASSF10; regulates RASSF10 expression by promoting SETD1A-mediated H3K4 methylation at the RASSF10 promoter. This is Nucleosome assembly protein 1-like 1 (NAP1L1) from Bos taurus (Bovine).